The chain runs to 107 residues: MRGGMGNMQKMMKQMQKMQKDMQKAQEELAEKVLEGTAGGGMVTVKVNGQKEVIDVIIKEEVVDPEDVEMLQDLVLAATNDALKKVDEVTNETMGKFTKGMNMPGLF.

Positions 1–27 are disordered; the sequence is MRGGMGNMQKMMKQMQKMQKDMQKAQE. Residues 8 to 17 show a composition bias toward low complexity; it reads MQKMMKQMQK. Over residues 18 to 27 the composition is skewed to basic and acidic residues; that stretch reads MQKDMQKAQE.

The protein belongs to the YbaB/EbfC family. Homodimer.

It localises to the cytoplasm. It is found in the nucleoid. Its function is as follows. Binds to DNA and alters its conformation. May be involved in regulation of gene expression, nucleoid organization and DNA protection. The sequence is that of Nucleoid-associated protein BLi00029/BL02358 from Bacillus licheniformis (strain ATCC 14580 / DSM 13 / JCM 2505 / CCUG 7422 / NBRC 12200 / NCIMB 9375 / NCTC 10341 / NRRL NRS-1264 / Gibson 46).